The sequence spans 455 residues: ATP-dependent protease ATPase subunit HslU (455 aa).

ATP contacts are provided by residues valine 23, 65–70, aspartate 266, glutamate 333, and arginine 405; that span reads GVGKTE.

This sequence belongs to the ClpX chaperone family. HslU subfamily. As to quaternary structure, a double ring-shaped homohexamer of HslV is capped on each side by a ring-shaped HslU homohexamer. The assembly of the HslU/HslV complex is dependent on binding of ATP.

It is found in the cytoplasm. ATPase subunit of a proteasome-like degradation complex; this subunit has chaperone activity. The binding of ATP and its subsequent hydrolysis by HslU are essential for unfolding of protein substrates subsequently hydrolyzed by HslV. HslU recognizes the N-terminal part of its protein substrates and unfolds these before they are guided to HslV for hydrolysis. This chain is ATP-dependent protease ATPase subunit HslU, found in Xanthomonas oryzae pv. oryzae (strain MAFF 311018).